We begin with the raw amino-acid sequence, 477 residues long: Iroquois homeobox protein 6a (477 aa).

The homeobox DNA-binding region spans 148-210 (GSTRRKNATR…NARRRLKKEN (63 aa)). Disordered stretches follow at residues 209–282 (ENKM…PDIP) and 303–323 (DYLD…QSTS). Basic and acidic residues predominate over residues 219–237 (KAGDDRKEDLDSKDSKDEQ). Over residues 243–253 (DLDDMEDEDCD) the composition is skewed to acidic residues. Residues 254 to 264 (KLDSDCEKSGQ) show a composition bias toward basic and acidic residues. The segment covering 310-321 (SKPQQQQPSPQS) has biased composition (low complexity).

The protein belongs to the TALE/IRO homeobox family.

The protein localises to the nucleus. Functionally, transcription factor. Binds to the iroquois binding site (IBS) motif of target genes to regulate gene expression; functions as a transcriptional activator or repressor. In concert with irx5a, plays a role in visual performance. The polypeptide is Iroquois homeobox protein 6a (Danio rerio (Zebrafish)).